The following is a 261-amino-acid chain: Caveolae-associated protein 3 (261 aa).

Positions 1–84 are interaction with CAVIN1; sequence MRESALERGP…SNTLAQLLAK (84 aa). Residues 20–78 form a leucine-zipper region; sequence VHAVTVVTLLEKLASMLETLRERQGGLARRQGGLAGSVRRIQSGLGALSRSHDTTSNTL. 2 positions are modified to phosphoserine: Ser-62 and Ser-70. Lys-128 participates in a covalent cross-link: Glycyl lysine isopeptide (Lys-Gly) (interchain with G-Cter in SUMO2). An interaction with CAV1 region spans residues 135–203; sequence ASAFQKAPEP…SGRKGPAAPP (69 aa). Residues 139–261 are disordered; sequence QKAPEPLGPA…EALLQMESVA (123 aa). The span at 158–170 shows a compositional bias: acidic residues; the sequence is LEAEVGESSDEEP. Ser-165, Ser-166, and Ser-173 each carry phosphoserine. Positions 200–212 are enriched in pro residues; that stretch reads AAPPPTPVKPPRL. Residues 213 to 231 show a composition bias toward low complexity; that stretch reads GPGRSAEAQPEAQPALEPT.

This sequence belongs to the CAVIN family. In terms of assembly, component of the CAVIN complex composed of CAVIN1, CAVIN2, CAVIN3 and CAVIN4. Interacts with PRKCD and with phosphatidylserine. Phosphatidylserine may form a bridge between PKC and PKC-binding partners and stabilize the binding. Interacts with PER2. Interacts with CAVIN1. Interacts (via leucine-zipper domain) with CAV1 in a cholesterol-sensitive manner. Interacts with EPS15L1. Post-translationally, in vitro, phosphorylated by PRKCD. In terms of tissue distribution, skeletal muscle, liver, stomach, lung, kidney and heart (at protein level). Strongly expressed in mammary and epithelial cells.

The protein resides in the cytoplasm. Its subcellular location is the membrane. The protein localises to the caveola. It is found in the cytosol. Its function is as follows. Regulates the traffic and/or budding of caveolae. Plays a role in caveola formation in a tissue-specific manner. Required for the formation of caveolae in smooth muscle but not in the lung and heart endothelial cells. Regulates the equilibrium between cell surface-associated and cell surface-dissociated caveolae by promoting the rapid release of caveolae from the cell surface. Plays a role in the regulation of the circadian clock. Modulates the period length and phase of circadian gene expression and also regulates expression and interaction of the core clock components PER1/2 and CRY1/2. In Homo sapiens (Human), this protein is Caveolae-associated protein 3.